Consider the following 123-residue polypeptide: Large ribosomal subunit protein bL19 (123 aa).

This sequence belongs to the bacterial ribosomal protein bL19 family.

In terms of biological role, this protein is located at the 30S-50S ribosomal subunit interface and may play a role in the structure and function of the aminoacyl-tRNA binding site. The sequence is that of Large ribosomal subunit protein bL19 from Acinetobacter baylyi (strain ATCC 33305 / BD413 / ADP1).